The primary structure comprises 189 residues: SAAASAARRARLLNLLFARSSAAAAASAAASAGAGSGSGGFGLGSRFLGGGRGGSRAAASAVASAGASARGGGGGGGGSSSAAAAAAAAAAAARNANLRGWLVASGVGAGAGAGAGAGAGAGAGAGAGAGGGSGGGGGGGSGSGGSGGSGGSGGSGGNDGNDGNDGSSSRGVKLYAYDYYKDDKKGSND.

A compositionally biased stretch (gly residues) spans 127–160 (AGAGGGSGGGGGGGSGSGGSGGSGGSGGSGGNDG). The tract at residues 127 to 170 (AGAGGGSGGGGGGGSGSGGSGGSGGSGGSGGNDGNDGNDGSSSR) is disordered.

As to expression, component of the organic matrix of calcified shell layers like nacre and prisms.

The protein resides in the secreted. The protein is Alanine and glycine-rich protein of Mytilus californianus (California mussel).